The sequence spans 384 residues: Dual-specificity RNA methyltransferase RlmN (384 aa).

Catalysis depends on glutamate 105, which acts as the Proton acceptor. The Radical SAM core domain occupies 111-350; the sequence is EDDRATLCVS…TIVRKTRGDD (240 aa). An intrachain disulfide couples cysteine 118 to cysteine 355. Positions 125, 129, and 132 each coordinate [4Fe-4S] cluster. Residues 179 to 180, serine 211, 233 to 235, and asparagine 312 contribute to the S-adenosyl-L-methionine site; these read GE and SLH. Cysteine 355 functions as the S-methylcysteine intermediate in the catalytic mechanism.

This sequence belongs to the radical SAM superfamily. RlmN family. The cofactor is [4Fe-4S] cluster.

Its subcellular location is the cytoplasm. It catalyses the reaction adenosine(2503) in 23S rRNA + 2 reduced [2Fe-2S]-[ferredoxin] + 2 S-adenosyl-L-methionine = 2-methyladenosine(2503) in 23S rRNA + 5'-deoxyadenosine + L-methionine + 2 oxidized [2Fe-2S]-[ferredoxin] + S-adenosyl-L-homocysteine. It carries out the reaction adenosine(37) in tRNA + 2 reduced [2Fe-2S]-[ferredoxin] + 2 S-adenosyl-L-methionine = 2-methyladenosine(37) in tRNA + 5'-deoxyadenosine + L-methionine + 2 oxidized [2Fe-2S]-[ferredoxin] + S-adenosyl-L-homocysteine. Functionally, specifically methylates position 2 of adenine 2503 in 23S rRNA and position 2 of adenine 37 in tRNAs. m2A2503 modification seems to play a crucial role in the proofreading step occurring at the peptidyl transferase center and thus would serve to optimize ribosomal fidelity. The sequence is that of Dual-specificity RNA methyltransferase RlmN from Escherichia coli O6:H1 (strain CFT073 / ATCC 700928 / UPEC).